Reading from the N-terminus, the 417-residue chain is RH-like protein (417 aa).

11 helical membrane-spanning segments follow: residues 12-32 (CLPL…FFFT), 44-64 (LVAS…GLGF), 77-97 (VAFN…LDGF), 125-145 (ISMN…MELV), 172-192 (IHVF…KPLP), 203-223 (TSPS…WPTF), 238-258 (VFST…VSSL), 265-285 (INMT…GASC), 287-307 (VIHS…ISFG), 331-351 (TFGL…ALRV), and 358-378 (MIGF…AMSI).

Belongs to the ammonium transporter (TC 2.A.49) family. Rh subfamily.

It localises to the membrane. Functionally, may be part of an oligomeric complex which is likely to have a transport or channel function in the erythrocyte membrane. In Macaca fascicularis (Crab-eating macaque), this protein is RH-like protein.